Reading from the N-terminus, the 298-residue chain is Super small secreted glycoprotein (298 aa).

Residues 1–32 (MGVTGILQLPRDRFKRTSFFLWVIILFQRTFS) form the signal peptide. N-linked (GlcNAc...) asparagine; by host glycosylation occurs at asparagine 40. Disulfide bonds link cysteine 108–cysteine 135 and cysteine 121–cysteine 147. Residues asparagine 204, asparagine 228, asparagine 238, asparagine 257, and asparagine 268 are each glycosylated (N-linked (GlcNAc...) asparagine; by host).

This sequence belongs to the filoviruses glycoprotein family.

It is found in the secreted. In Epomops franqueti (Franquet's epauletted fruit bat), this protein is Super small secreted glycoprotein (GP).